A 101-amino-acid polypeptide reads, in one-letter code: Putative pterin-4-alpha-carbinolamine dehydratase (101 aa).

It belongs to the pterin-4-alpha-carbinolamine dehydratase family.

The enzyme catalyses (4aS,6R)-4a-hydroxy-L-erythro-5,6,7,8-tetrahydrobiopterin = (6R)-L-erythro-6,7-dihydrobiopterin + H2O. The chain is Putative pterin-4-alpha-carbinolamine dehydratase from Rhizobium leguminosarum bv. trifolii (strain WSM2304).